Reading from the N-terminus, the 163-residue chain is MDPNKVEISRLEALPQDLLREIVAKIGVKSAEDYHNCILSCKELGASANDERVLKTLNLALLVKKPLSCRKHLLIMKKCLANNNPDAHYIKGIIWYFNLDHCDVDLHHIGIAANGGQKEAIYMYAMLLLCRGRTEEGKTYMSQLEWAKTPPWLKRVGNKSKLH.

The F-box domain maps to 8 to 57 (ISRLEALPQDLLREIVAKIGVKSAEDYHNCILSCKELGASANDERVLKTL).

The protein is F-box protein At2g35280 of Arabidopsis thaliana (Mouse-ear cress).